Here is a 610-residue protein sequence, read N- to C-terminus: UvrABC system protein C (610 aa).

The GIY-YIG domain occupies 16 to 94 (HQPGVYRMYN…IKQYLPKYNV (79 aa)). Residues 204-239 (QQVLKQLIEKMEVASQQLRFEDAAKFRDQIQAIRRV) form the UVR domain.

Belongs to the UvrC family. In terms of assembly, interacts with UvrB in an incision complex.

The protein localises to the cytoplasm. Functionally, the UvrABC repair system catalyzes the recognition and processing of DNA lesions. UvrC both incises the 5' and 3' sides of the lesion. The N-terminal half is responsible for the 3' incision and the C-terminal half is responsible for the 5' incision. This chain is UvrABC system protein C, found in Vibrio parahaemolyticus serotype O3:K6 (strain RIMD 2210633).